We begin with the raw amino-acid sequence, 449 residues long: Tubulin alpha-2B chain (449 aa).

Gln-11 provides a ligand contact to GTP. Lys-40 is modified (N6-acetyllysine). GTP is bound by residues Glu-71, Ser-140, Gly-144, Thr-145, Thr-179, Asn-206, and Asn-228. Glu-71 is a binding site for Mg(2+). Residue Glu-254 is part of the active site.

Belongs to the tubulin family. In terms of assembly, dimer of alpha and beta chains. A typical microtubule is a hollow water-filled tube with an outer diameter of 25 nm and an inner diameter of 15 nM. Alpha-beta heterodimers associate head-to-tail to form protofilaments running lengthwise along the microtubule wall with the beta-tubulin subunit facing the microtubule plus end conferring a structural polarity. Microtubules usually have 13 protofilaments but different protofilament numbers can be found in some organisms and specialized cells. The cofactor is Mg(2+). In terms of processing, acetylation of alpha chains at Lys-40 stabilizes microtubules and affects affinity and processivity of microtubule motors. This modification has a role in multiple cellular functions, ranging from cell motility, cell cycle progression or cell differentiation to intracellular trafficking and signaling.

The protein resides in the cytoplasm. The protein localises to the cytoskeleton. It is found in the spindle. Its subcellular location is the nucleus. It catalyses the reaction GTP + H2O = GDP + phosphate + H(+). Functionally, tubulin is the major constituent of microtubules, a cylinder consisting of laterally associated linear protofilaments composed of alpha- and beta-tubulin heterodimers. Microtubules grow by the addition of GTP-tubulin dimers to the microtubule end, where a stabilizing cap forms. Below the cap, tubulin dimers are in GDP-bound state, owing to GTPase activity of alpha-tubulin. This is Tubulin alpha-2B chain (ALTBE) from Physarum polycephalum (Slime mold).